The primary structure comprises 339 residues: Glycerol-3-phosphate dehydrogenase [NAD(P)+] (339 aa).

NADPH contacts are provided by Ser-15, Tyr-16, His-36, and Lys-110. Residues Lys-110, Gly-139, and Thr-141 each coordinate sn-glycerol 3-phosphate. Ala-143 contributes to the NADPH binding site. The sn-glycerol 3-phosphate site is built by Lys-195, Asp-248, Ser-258, Arg-259, and Asn-260. Lys-195 (proton acceptor) is an active-site residue. Position 259 (Arg-259) interacts with NADPH. Residues Val-283 and Glu-285 each contribute to the NADPH site.

The protein belongs to the NAD-dependent glycerol-3-phosphate dehydrogenase family.

The protein localises to the cytoplasm. The enzyme catalyses sn-glycerol 3-phosphate + NAD(+) = dihydroxyacetone phosphate + NADH + H(+). It carries out the reaction sn-glycerol 3-phosphate + NADP(+) = dihydroxyacetone phosphate + NADPH + H(+). It participates in membrane lipid metabolism; glycerophospholipid metabolism. Catalyzes the reduction of the glycolytic intermediate dihydroxyacetone phosphate (DHAP) to sn-glycerol 3-phosphate (G3P), the key precursor for phospholipid synthesis. The chain is Glycerol-3-phosphate dehydrogenase [NAD(P)+] from Shigella flexneri serotype 5b (strain 8401).